Consider the following 79-residue polypeptide: MKQAINKSKRSSRRRLPPIRSGEIIDYKNINLLRRFISEQGKILSRRMNRLTSKQQRLMTIAIKRARVLALLPFLNNEN.

This sequence belongs to the bacterial ribosomal protein bS18 family. As to quaternary structure, part of the 30S ribosomal subunit.

The protein resides in the plastid. The protein localises to the chloroplast. The sequence is that of Small ribosomal subunit protein bS18c from Physcomitrium patens (Spreading-leaved earth moss).